The sequence spans 298 residues: N-acetylmuramic acid 6-phosphate etherase (298 aa).

Residues 55 to 218 (IHTQVSGGGR…STGLMIKSGK (164 aa)) form the SIS domain. Catalysis depends on Glu-83, which acts as the Proton donor. Glu-114 is an active-site residue.

Belongs to the GCKR-like family. MurNAc-6-P etherase subfamily. In terms of assembly, homodimer.

The enzyme catalyses N-acetyl-D-muramate 6-phosphate + H2O = N-acetyl-D-glucosamine 6-phosphate + (R)-lactate. The protein operates within amino-sugar metabolism; 1,6-anhydro-N-acetylmuramate degradation. It participates in amino-sugar metabolism; N-acetylmuramate degradation. It functions in the pathway cell wall biogenesis; peptidoglycan recycling. Functionally, specifically catalyzes the cleavage of the D-lactyl ether substituent of MurNAc 6-phosphate, producing GlcNAc 6-phosphate and D-lactate. Together with AnmK, is also required for the utilization of anhydro-N-acetylmuramic acid (anhMurNAc) either imported from the medium or derived from its own cell wall murein, and thus plays a role in cell wall recycling. In Escherichia coli O127:H6 (strain E2348/69 / EPEC), this protein is N-acetylmuramic acid 6-phosphate etherase.